The primary structure comprises 158 residues: NADPH-dependent 7-cyano-7-deazaguanine reductase (158 aa).

Cysteine 56 serves as the catalytic Thioimide intermediate. Residue aspartate 63 is the Proton donor of the active site. Substrate is bound by residues 78-80 and 97-98; these read VES and HE.

The protein belongs to the GTP cyclohydrolase I family. QueF type 1 subfamily.

The protein resides in the cytoplasm. It carries out the reaction 7-aminomethyl-7-carbaguanine + 2 NADP(+) = 7-cyano-7-deazaguanine + 2 NADPH + 3 H(+). It functions in the pathway tRNA modification; tRNA-queuosine biosynthesis. In terms of biological role, catalyzes the NADPH-dependent reduction of 7-cyano-7-deazaguanine (preQ0) to 7-aminomethyl-7-deazaguanine (preQ1). The protein is NADPH-dependent 7-cyano-7-deazaguanine reductase of Rhodopseudomonas palustris (strain HaA2).